A 204-amino-acid polypeptide reads, in one-letter code: Cold and drought-regulated protein CORA (204 aa).

18 tandem repeats follow at residues 54–59, 65–70, 71–76, 78–83, 85–90, 98–100, 101–103, 112–114, 115–117, 126–128, 129–131, 164–169, 171–176, 178–180, 181–183, 184–186, 187–189, and 190–192. Positions 54 to 176 are 7 X 6 AA repeats of Y-N-H-G-G-G; the sequence is YNHGGGYNGG…GGGGYNHGGG (123 aa). The segment at 98–192 is 11 X 3 AA repeats of H-G-G; the sequence is HGGHGGGGYN…GHGGHGGHGG (95 aa). Residues 169–194 are compositionally biased toward gly residues; that stretch reads GGYNHGGGGHGGHGGHGGHGGHGGHG. The segment at 169 to 204 is disordered; it reads GGYNHGGGGHGGHGGHGGHGGHGGHGAVQTEDNTQN.

Belongs to the GRP family.

In terms of biological role, may be involved in resistance of the plant to environmental stress. The polypeptide is Cold and drought-regulated protein CORA (CORA) (Medicago sativa (Alfalfa)).